The sequence spans 181 residues: TATA-box-binding protein C (181 aa).

2 tandem repeats follow at residues 5–83 (IANI…LGML) and 99–177 (VENV…QSKV).

Belongs to the TBP family.

General factor that plays a role in the activation of archaeal genes transcribed by RNA polymerase. Binds specifically to the TATA box promoter element which lies close to the position of transcription initiation. The sequence is that of TATA-box-binding protein C (tbpC1) from Halobacterium salinarum (strain ATCC 700922 / JCM 11081 / NRC-1) (Halobacterium halobium).